We begin with the raw amino-acid sequence, 122 residues long: Iron-sulfur cluster insertion protein ErpA (122 aa).

Residues Cys50, Cys114, and Cys116 each contribute to the iron-sulfur cluster site.

Belongs to the HesB/IscA family. As to quaternary structure, homodimer. It depends on iron-sulfur cluster as a cofactor.

In terms of biological role, required for insertion of 4Fe-4S clusters for at least IspG. This chain is Iron-sulfur cluster insertion protein ErpA, found in Alkalilimnicola ehrlichii (strain ATCC BAA-1101 / DSM 17681 / MLHE-1).